The following is a 394-amino-acid chain: Elongation factor Tu 2 (394 aa).

The tr-type G domain maps to 10-204 (KPHVNVGTIG…YLDTYIPEPE (195 aa)). A G1 region spans residues 19–26 (GHVDHGKT). A GTP-binding site is contributed by 19 to 26 (GHVDHGKT). T26 provides a ligand contact to Mg(2+). The G2 stretch occupies residues 60-64 (GITIN). The G3 stretch occupies residues 81-84 (DCPG). Residues 81–85 (DCPGH) and 136–139 (NKCD) contribute to the GTP site. The segment at 136-139 (NKCD) is G4. The segment at 174–176 (SAL) is G5.

Belongs to the TRAFAC class translation factor GTPase superfamily. Classic translation factor GTPase family. EF-Tu/EF-1A subfamily. Monomer.

The protein localises to the cytoplasm. The catalysed reaction is GTP + H2O = GDP + phosphate + H(+). In terms of biological role, GTP hydrolase that promotes the GTP-dependent binding of aminoacyl-tRNA to the A-site of ribosomes during protein biosynthesis. This is Elongation factor Tu 2 from Yersinia enterocolitica serotype O:8 / biotype 1B (strain NCTC 13174 / 8081).